The following is an 81-amino-acid chain: Large ribosomal subunit protein uL24 (81 aa).

Belongs to the universal ribosomal protein uL24 family. In terms of assembly, part of the 50S ribosomal subunit.

In terms of biological role, one of two assembly initiator proteins, it binds directly to the 5'-end of the 23S rRNA, where it nucleates assembly of the 50S subunit. Its function is as follows. One of the proteins that surrounds the polypeptide exit tunnel on the outside of the subunit. The chain is Large ribosomal subunit protein uL24 from Chloroherpeton thalassium (strain ATCC 35110 / GB-78).